A 410-amino-acid polypeptide reads, in one-letter code: Peptidase T (410 aa).

Histidine 78 serves as a coordination point for Zn(2+). Residue aspartate 80 is part of the active site. Aspartate 140 is a Zn(2+) binding site. Glutamate 173 acts as the Proton acceptor in catalysis. Residues glutamate 174, aspartate 196, and histidine 379 each coordinate Zn(2+).

This sequence belongs to the peptidase M20B family. Zn(2+) is required as a cofactor.

It is found in the cytoplasm. The catalysed reaction is Release of the N-terminal residue from a tripeptide.. In terms of biological role, cleaves the N-terminal amino acid of tripeptides. The protein is Peptidase T of Pectobacterium carotovorum subsp. carotovorum (strain PC1).